Reading from the N-terminus, the 773-residue chain is E3 ubiquitin-protein ligase RFWD3 (773 aa).

Disordered regions lie at residues 18–67, 92–117, 139–230, and 259–279; these read VAEQ…SQVG, RVEN…IPVS, LRPP…EEVV, and GETL…SVSK. Ser-47 carries the post-translational modification Phosphoserine; by ATM and ATR. Over residues 50 to 59 the composition is skewed to low complexity; the sequence is APPLLQPAPA. Position 64 is a phosphoserine; by ATM and ATR (Ser-64). A compositionally biased stretch (basic residues) spans 151-164; the sequence is RSRRRRGSASRRSR. Positions 186-205 are enriched in polar residues; that stretch reads VSRTQPHLPSMSQDSETRNP. Residues 207–221 show a composition bias toward low complexity; the sequence is SEDLQVSSSSSSDSE. The segment covering 263–273 has biased composition (polar residues); that stretch reads PKQSPQKTNPL. The RING-type; degenerate zinc finger occupies 287–331; it reads CTICFEHWTNAGDHRLSALRCGHLFGYKCISKWLKGQARKCPQCN. Positions 361 to 403 form a coiled coil; it reads SLLKEQMLRKQAELESAQCRLQLQVLTDECSKLHSRVQDLQKL. 3 WD repeats span residues 494-536, 538-576, and 582-627; these read MHGK…QTYN, GRPV…SHIQ, and KARC…SHWP.

Interacts with MDM2 and p53/TP53. Binds to the RPA complex via direct interaction with RPA2. Interacts with RAD51. In terms of processing, phosphorylated at Ser-46 and Ser-63 upon DNA damage by ATM or ATR. ATM phosphorylation occurs at early times upon DNA damage, while ATR is the major kinase at later times. Phosphorylation by ATM and ATR is required to stabilize p53/TP53. Part of the phosphorylation depends upon RPA2 presence.

Its subcellular location is the nucleus. It is found in the PML body. The protein localises to the cytoplasm. The catalysed reaction is S-ubiquitinyl-[E2 ubiquitin-conjugating enzyme]-L-cysteine + [acceptor protein]-L-lysine = [E2 ubiquitin-conjugating enzyme]-L-cysteine + N(6)-ubiquitinyl-[acceptor protein]-L-lysine.. It participates in protein modification; protein ubiquitination. Its function is as follows. E3 ubiquitin-protein ligase required for the repair of DNA interstrand cross-links (ICL) in response to DNA damage. Plays a key role in RPA-mediated DNA damage signaling and repair. Acts by mediating ubiquitination of the RPA complex (RPA1, RPA2 and RPA3 subunits) and RAD51 at stalled replication forks, leading to remove them from DNA damage sites and promote homologous recombination. Also mediates the ubiquitination of p53/TP53 in the late response to DNA damage, and acts as a positive regulator of p53/TP53 stability, thereby regulating the G1/S DNA damage checkpoint. May act by catalyzing the formation of short polyubiquitin chains on p53/TP53 that are not targeted to the proteasome. In response to ionizing radiation, interacts with MDM2 and enhances p53/TP53 ubiquitination, possibly by restricting MDM2 from extending polyubiquitin chains on ubiquitinated p53/TP53. Required to translesion DNA synthesis across DNA-protein cross-link adducts by catalyzing ubiquitination of proteins on single-stranded DNA (ssDNA). In Ailuropoda melanoleuca (Giant panda), this protein is E3 ubiquitin-protein ligase RFWD3 (RFWD3).